Here is a 183-residue protein sequence, read N- to C-terminus: Protein CT_584 (183 aa).

The protein belongs to the chlamydial CPn_0803/CT_584/TC_0873 family.

The chain is Protein CT_584 from Chlamydia trachomatis serovar D (strain ATCC VR-885 / DSM 19411 / UW-3/Cx).